The sequence spans 282 residues: Bifunctional protein FolD (282 aa).

NADP(+)-binding positions include 164–166, Ile189, and Ile230; that span reads GAS.

This sequence belongs to the tetrahydrofolate dehydrogenase/cyclohydrolase family. As to quaternary structure, homodimer.

It catalyses the reaction (6R)-5,10-methylene-5,6,7,8-tetrahydrofolate + NADP(+) = (6R)-5,10-methenyltetrahydrofolate + NADPH. It carries out the reaction (6R)-5,10-methenyltetrahydrofolate + H2O = (6R)-10-formyltetrahydrofolate + H(+). It participates in one-carbon metabolism; tetrahydrofolate interconversion. In terms of biological role, catalyzes the oxidation of 5,10-methylenetetrahydrofolate to 5,10-methenyltetrahydrofolate and then the hydrolysis of 5,10-methenyltetrahydrofolate to 10-formyltetrahydrofolate. The protein is Bifunctional protein FolD of Campylobacter jejuni subsp. doylei (strain ATCC BAA-1458 / RM4099 / 269.97).